The following is a 374-amino-acid chain: Cathepsin W (374 aa).

The signal sequence occupies residues 1–21; it reads MAITVYLSCLLVLSMAGLAQG. Positions 22 to 127 are excised as a propeptide; it reads IKSSLRSQDP…EVGSEEWGES (106 aa). 2 cysteine pairs are disulfide-bonded: cysteine 150–cysteine 191 and cysteine 184–cysteine 226. The active site involves cysteine 153. The N-linked (GlcNAc...) asparagine glycan is linked to asparagine 205. Active-site residues include histidine 291 and asparagine 329. The N-linked (GlcNAc...) asparagine glycan is linked to asparagine 347.

The protein belongs to the peptidase C1 family.

The protein localises to the endoplasmic reticulum. Its function is as follows. May have a specific function in the mechanism or regulation of T-cell cytolytic activity. The protein is Cathepsin W (CTSW) of Felis catus (Cat).